The chain runs to 299 residues: Palmitoyltransferase ZDHHC3 (299 aa).

At 1-47 (MMLIPTHHFRDIERKPEYLQPEKCAPPPFPGPVGTMWFIRDGCGIAC) the chain is on the cytoplasmic side. Position 18 is a phosphotyrosine (tyrosine 18). A helical transmembrane segment spans residues 48–68 (AIVTWFLVLYAEFVVLFVMLI). The Lumenal portion of the chain corresponds to 69–72 (PSRD). The chain crosses the membrane as a helical span at residues 73–93 (YAYSIINGIVFNLLAFLALAS). Residues 94-171 (HCRAMLTDPG…NCVGENNQKY (78 aa)) are Cytoplasmic-facing. Residues 128 to 254 (KCPKCCSIKP…DETGIEQLKK (127 aa)) form the DHHC domain. Cysteine 146 carries S-palmitoyl cysteine lipidation. Residue cysteine 157 is the S-palmitoyl cysteine intermediate of the active site. Residues 172–192 (FVLFTMYIALISLHALIMVGF) traverse the membrane as a helical segment. Over 193-214 (HFLHCFEEDWTKCSSFSPPTTV) the chain is Lumenal. A helical transmembrane segment spans residues 215–235 (ILLILLCFEALLFLIFTSVMF). At 236–299 (GTQVHSICTD…GKADPYQYVV (64 aa)) the chain is on the cytoplasmic side.

The protein belongs to the DHHC palmitoyltransferase family. Monomer. Homooligomers. The monomeric form has a higher catalytic activity. Forms heterooligomers with ZDHHC7. Interacts with TNFRSF10A. Phosphorylation by FGFR1 and SRC probably regulates the palmitoyltransferase activity. Post-translationally, autopalmitoylated.

It is found in the golgi apparatus membrane. The catalysed reaction is L-cysteinyl-[protein] + hexadecanoyl-CoA = S-hexadecanoyl-L-cysteinyl-[protein] + CoA. It carries out the reaction L-cysteinyl-[protein] + tetradecanoyl-CoA = S-tetradecanoyl-L-cysteinyl-[protein] + CoA. The enzyme catalyses L-cysteinyl-[protein] + octadecanoyl-CoA = S-octadecanoyl-L-cysteinyl-[protein] + CoA. Its function is as follows. Golgi-localized palmitoyltransferase that catalyzes the addition of palmitate onto various protein substrates. Has no stringent fatty acid selectivity and in addition to palmitate can also transfer onto target proteins myristate from tetradecanoyl-CoA and stearate from octadecanoyl-CoA. Plays an important role in G protein-coupled receptor signaling pathways involving GNAQ and potentially other heterotrimeric G proteins by regulating their dynamic association with the plasma membrane. Palmitoylates ITGA6 and ITGB4, thereby regulating the alpha-6/beta-4 integrin localization, expression and function in cell adhesion to laminin. Plays a role in the TRAIL-activated apoptotic signaling pathway most probably through the palmitoylation and localization to the plasma membrane of TNFRSF10A. In the brain, by palmitoylating the gamma subunit GABRG2 of GABA(A) receptors and regulating their postsynaptic accumulation, plays a role in synaptic GABAergic inhibitory function and GABAergic innervation. Palmitoylates the neuronal protein GAP43 which is also involved in the formation of GABAergic synapses. Palmitoylates NCDN thereby regulating its association with endosome membranes. Probably palmitoylates PRCD and is involved in its proper localization within the photoreceptor. Could mediate the palmitoylation of NCAM1 and regulate neurite outgrowth. Could palmitoylate DNAJC5 and regulate its localization to Golgi membranes. Also constitutively palmitoylates DLG4. May also palmitoylate SNAP25. Could palmitoylate the glutamate receptors GRIA1 and GRIA2 but this has not been confirmed in vivo. Could also palmitoylate the D(2) dopamine receptor DRD2. May also palmitoylate LAMTOR1, promoting its localization to lysosomal membranes. Palmitoylates the Toll-like receptor 9/TLR9 in the Golgi and thereby regulates TLR9 trafficking to endosomes. May palmitoylate CALHM1 and CALHM3 subunits of gustatory voltage-gated ion channels and modulate channel gating and kinetics. The chain is Palmitoyltransferase ZDHHC3 from Rattus norvegicus (Rat).